Here is a 423-residue protein sequence, read N- to C-terminus: MGALLAKWRAKPSTVEVLEKMEKDIQSLEEFRDKNQKLRKIWVARLFFYSTILYILTSLTVYLWYLPDGMTARLLTMLLFLSFPVLIWFVRTLLILWFSRRTERNNDALELLKTEKKKILEEVMEKETYKAAKLILERFDPDSRKIKELELPVPGPPITPRPGQDLRQRTAAQRNISVSTPVNPGQESPQVPGLLAATPSLQRDTSAPGGPPERSVQPTPQSNILQRRPGSPATTVSGMAIHPPGPPLARPILPRERGAMDRVIEYLVGDGPQNRYALICQQCFSHNGMALKEEFEYVAFRCAYCYFLNPARKTRPQAPRLQEINFDRQRQRTDSQGSVSSVQPPAAEQLENPQSPEAMEEDSPAQAEEQAIEEDSTCSEQQWEEAPDDSEKDPSPVAELNPSESNPSPPAANETEESFMETE.

Residues 1-45 (MGALLAKWRAKPSTVEVLEKMEKDIQSLEEFRDKNQKLRKIWVAR) are Cytoplasmic-facing. The stretch at 16 to 40 (EVLEKMEKDIQSLEEFRDKNQKLRK) forms a coiled coil. The chain crosses the membrane as a helical span at residues 46-66 (LFFYSTILYILTSLTVYLWYL). Topologically, residues 67 to 77 (PDGMTARLLTM) are lumenal. A helical transmembrane segment spans residues 78–98 (LLFLSFPVLIWFVRTLLILWF). Residues 99 to 423 (SRRTERNNDA…ETEESFMETE (325 aa)) are Cytoplasmic-facing. Residues 101 to 128 (RTERNNDALELLKTEKKKILEEVMEKET) are a coiled coil. Residues 147–169 (KELELPVPGPPITPRPGQDLRQR) form a disordered region. T159 carries the phosphothreonine modification. A phosphoserine mark is found at S177, S179, and S188. T198 bears the Phosphothreonine mark. The disordered stretch occupies residues 200 to 247 (SLQRDTSAPGGPPERSVQPTPQSNILQRRPGSPATTVSGMAIHPPGPP). Phosphoserine occurs at positions 206 and 215. The span at 216–225 (VQPTPQSNIL) shows a compositional bias: polar residues. T219 bears the Phosphothreonine mark. Phosphoserine is present on residues S222 and S231. A C4-type; plays a role in ER morphology zinc finger spans residues 280–305 (CQQCFSHNGMALKEEFEYVAFRCAYC). Positions 318 to 423 (APRLQEINFD…ETEESFMETE (106 aa)) are disordered. The segment covering 334–343 (DSQGSVSSVQ) has biased composition (polar residues). 2 stretches are compositionally biased toward acidic residues: residues 370 to 391 (QAIEEDSTCSEQQWEEAPDDSE) and 414 to 423 (ETEESFMETE).

This sequence belongs to the lunapark family. In terms of assembly, homodimer; homodimerization requires the C4-type zinc finger motif and decreases during mitosis in a phosphorylation-dependent manner. In terms of processing, phosphorylated. Phosphorylation at Thr-159 occurs during interphase. Phosphorylation at Ser-177, Ser-179, Ser-188, Thr-198, Ser-206, Ser-215, Thr-219, Ser-222 and Ser-231 occurs during mitosis; these phosphorylations reduce both its homodimerization and the ER three-way tubular junction formation.

It localises to the endoplasmic reticulum membrane. In terms of biological role, endoplasmic reticulum (ER)-shaping membrane protein that plays a role in determining ER morphology. Involved in the stabilization of nascent three-way ER tubular junctions within the ER network. May also play a role as a curvature-stabilizing protein within three-way ER tubular junction network. In Xenopus tropicalis (Western clawed frog), this protein is Endoplasmic reticulum junction formation protein lunapark (lnpk).